The chain runs to 106 residues: L-rhamnose mutarotase (106 aa).

Residue Tyr20 participates in substrate binding. His24 functions as the Proton donor in the catalytic mechanism. Substrate-binding positions include Tyr43 and 78–79 (WW).

It belongs to the rhamnose mutarotase family. As to quaternary structure, homodimer.

It localises to the cytoplasm. The enzyme catalyses alpha-L-rhamnose = beta-L-rhamnose. Its pathway is carbohydrate metabolism; L-rhamnose metabolism. Its function is as follows. Involved in the anomeric conversion of L-rhamnose. The sequence is that of L-rhamnose mutarotase from Verminephrobacter eiseniae (strain EF01-2).